The primary structure comprises 444 residues: Phosphoglucosamine mutase (444 aa).

The active-site Phosphoserine intermediate is the S102. Residues S102, D241, D243, and D245 each coordinate Mg(2+). Position 102 is a phosphoserine (S102).

This sequence belongs to the phosphohexose mutase family. Mg(2+) is required as a cofactor. In terms of processing, activated by phosphorylation.

The catalysed reaction is alpha-D-glucosamine 1-phosphate = D-glucosamine 6-phosphate. Functionally, catalyzes the conversion of glucosamine-6-phosphate to glucosamine-1-phosphate. The chain is Phosphoglucosamine mutase from Buchnera aphidicola subsp. Acyrthosiphon pisum (strain 5A).